Reading from the N-terminus, the 142-residue chain is Hemoglobin subunit alpha (142 aa).

Residues 2–142 (VLSAADKTNV…LSTVLTSKYR (141 aa)) enclose the Globin domain. Phosphoserine is present on serine 4. N6-succinyllysine is present on lysine 8. Threonine 9 bears the Phosphothreonine mark. An N6-succinyllysine modification is found at lysine 12. Lysine 17 carries the post-translational modification N6-acetyllysine; alternate. Residue lysine 17 is modified to N6-succinyllysine; alternate. At tyrosine 25 the chain carries Phosphotyrosine. A Phosphoserine modification is found at serine 36. N6-succinyllysine is present on lysine 41. Serine 50 carries the post-translational modification Phosphoserine. Residue glutamine 59 participates in O2 binding. Histidine 88 contacts heme b. A Phosphothreonine modification is found at threonine 109. Serine 125 carries the phosphoserine modification. 2 positions are modified to phosphothreonine: threonine 135 and threonine 138. Residue serine 139 is modified to Phosphoserine.

The protein belongs to the globin family. Heterotetramer of two alpha chains and two beta chains. Red blood cells.

Involved in oxygen transport from the lung to the various peripheral tissues. Functionally, hemopressin acts as an antagonist peptide of the cannabinoid receptor CNR1. Hemopressin-binding efficiently blocks cannabinoid receptor CNR1 and subsequent signaling. The chain is Hemoglobin subunit alpha (HBA) from Monodelphis domestica (Gray short-tailed opossum).